Here is a 297-residue protein sequence, read N- to C-terminus: MMTLPIVKGEYKKDYNLKHLTWFKVGGNAEIFFKPFDSEDLASFLRQNKQKLPITTFGAGSNIIIRDGGIEGVTIKLGQSFSNIDFIDDNHLVVGSSCLNYNLAKFCQANAISGFEFLVGIPGTIGGGAAMNAGAYGSEFKDIIVRIEAIDFAGNFLTFTNEEIGFKYRSNNLPKNLIILKAIFKVNKGDSENILLRMNEINATRSRTQPIKERTGGSTFANPEGGLKSWQLIDKAGLRGYRIGGASVSELHCNFMINNGDATAKDLEDLGNFVRQNVFEDSGVKLNWEIKRIGKYV.

Positions 24 to 189 (KVGGNAEIFF…LKAIFKVNKG (166 aa)) constitute an FAD-binding PCMH-type domain. The active site involves arginine 169. The Proton donor role is filled by serine 218. Glutamate 289 is a catalytic residue.

This sequence belongs to the MurB family. Requires FAD as cofactor.

The protein resides in the cytoplasm. The catalysed reaction is UDP-N-acetyl-alpha-D-muramate + NADP(+) = UDP-N-acetyl-3-O-(1-carboxyvinyl)-alpha-D-glucosamine + NADPH + H(+). Its pathway is cell wall biogenesis; peptidoglycan biosynthesis. Cell wall formation. The polypeptide is UDP-N-acetylenolpyruvoylglucosamine reductase (Rickettsia canadensis (strain McKiel)).